We begin with the raw amino-acid sequence, 142 residues long: MKTYVAKPESVVHDWFIVDAAGKTLGRLSAEIASRLRGKHKPEFTPHVDTGDYIIVINAAKVRVTGNKATDKVYYHHTNFAGGIKSITFDKLIEKAPERTIQTAVKGMLPKGPLGYAMFKKLKVYAGAEHPHAAQQPKELNI.

Belongs to the universal ribosomal protein uL13 family. Part of the 50S ribosomal subunit.

Functionally, this protein is one of the early assembly proteins of the 50S ribosomal subunit, although it is not seen to bind rRNA by itself. It is important during the early stages of 50S assembly. The sequence is that of Large ribosomal subunit protein uL13 from Cellvibrio japonicus (strain Ueda107) (Pseudomonas fluorescens subsp. cellulosa).